The following is a 314-amino-acid chain: Olfactory receptor 4Q2 (314 aa).

Residues 1 to 26 (MDKNQTEVMREFFLSGFSQTPSIEAG) are Extracellular-facing. Asn4 carries N-linked (GlcNAc...) asparagine glycosylation. Residues 27–47 (LFVLFLFFYMSIWVGNVLIMV) traverse the membrane as a helical segment. The Cytoplasmic segment spans residues 48–61 (TVASDKYLNSSPMY). The chain crosses the membrane as a helical span at residues 62–84 (FLLGNLSFLDLCYSTVTTPKLLA). The Extracellular segment spans residues 85-98 (DFFNHEKLISYDQC). Cys98 and Cys181 are joined by a disulfide. Residues 99–119 (IVQLFFLHFVGAAEMFLLTVM) traverse the membrane as a helical segment. Topologically, residues 120–142 (AYDRYVAICRPLHYTTVMSRGLC) are cytoplasmic. The helical transmembrane segment at 143 to 163 (CVLVAASWMGGFVHSTVQTIL) threads the bilayer. At 164–196 (TVHLPFCGPNQVENTFFCDVPPVIKLACADTFV) the chain is on the extracellular side. A helical membrane pass occupies residues 197–217 (IELLMVSNSGLISTISFVVLI). The Cytoplasmic segment spans residues 218–236 (SSYTTILVKIRSKEGRRKA). Residues 237 to 257 (LSTCASHLMVVTLFFGPCIFI) form a helical membrane-spanning segment. The Extracellular segment spans residues 258–268 (YARPFSTFSVD). Residues 269 to 289 (KMVSVLYNVITPMLNPLIYTL) traverse the membrane as a helical segment. Topologically, residues 290–314 (RNKEVKSAMQKLWVRNGLTWKKQET) are cytoplasmic.

It belongs to the G-protein coupled receptor 1 family.

The protein localises to the cell membrane. Functionally, odorant receptor. The protein is Olfactory receptor 4Q2 (OR4Q2) of Homo sapiens (Human).